We begin with the raw amino-acid sequence, 109 residues long: Small ribosomal subunit protein eS25 (109 aa).

The span at 1-13 shows a compositional bias: basic and acidic residues; it reads MVKKIQESKEKKA. The segment at 1–34 is disordered; sequence MVKKIQESKEKKALKAASGTRKDKKKWGDGRKKE.

This sequence belongs to the eukaryotic ribosomal protein eS25 family.

The polypeptide is Small ribosomal subunit protein eS25 (RPS25-1) (Encephalitozoon cuniculi (strain GB-M1) (Microsporidian parasite)).